Here is a 275-residue protein sequence, read N- to C-terminus: Trans-aconitate 2-methyltransferase (275 aa).

The protein belongs to the methyltransferase superfamily. Tam family.

The protein localises to the cytoplasm. It carries out the reaction trans-aconitate + S-adenosyl-L-methionine = (E)-3-(methoxycarbonyl)pent-2-enedioate + S-adenosyl-L-homocysteine. Its function is as follows. Catalyzes the S-adenosylmethionine monomethyl esterification of trans-aconitate. The chain is Trans-aconitate 2-methyltransferase from Pseudomonas aeruginosa (strain ATCC 15692 / DSM 22644 / CIP 104116 / JCM 14847 / LMG 12228 / 1C / PRS 101 / PAO1).